A 401-amino-acid polypeptide reads, in one-letter code: Argininosuccinate synthase (401 aa).

ATP is bound at residue 8–16 (AYSGGLDTS). Y86 is an L-citrulline binding site. An ATP-binding site is contributed by G116. Residues T118, N122, and D123 each coordinate L-aspartate. N122 serves as a coordination point for L-citrulline. 4 residues coordinate L-citrulline: R126, S174, E258, and Y270.

This sequence belongs to the argininosuccinate synthase family. Type 1 subfamily. As to quaternary structure, homotetramer.

Its subcellular location is the cytoplasm. It carries out the reaction L-citrulline + L-aspartate + ATP = 2-(N(omega)-L-arginino)succinate + AMP + diphosphate + H(+). It functions in the pathway amino-acid biosynthesis; L-arginine biosynthesis; L-arginine from L-ornithine and carbamoyl phosphate: step 2/3. The polypeptide is Argininosuccinate synthase (Acidothermus cellulolyticus (strain ATCC 43068 / DSM 8971 / 11B)).